Reading from the N-terminus, the 383-residue chain is Centractin (383 aa).

Residues 227–246 (PQKEEELLEPDSSSSKPVQP) form a disordered region.

The protein belongs to the actin family. ARP1 subfamily.

The protein resides in the cytoplasm. Its subcellular location is the cytoskeleton. It localises to the microtubule organizing center. It is found in the centrosome. Functionally, component of a multi-subunit complex, PPK2 (poly P kinase complex 2) involved in microtubule based vesicle motility. It is associated with the centrosome. PPK2 complex can synthesize a poly chain of hundreds of phosphate residues linked by ATP-like bonds. In Dictyostelium discoideum (Social amoeba), this protein is Centractin (arpA).